We begin with the raw amino-acid sequence, 990 residues long: Kinesin-related protein 5 (990 aa).

In terms of domain architecture, Kinesin motor spans 6–330; sequence NIRVMCRFRP…LKFGARAKSI (325 aa). 83-90 lines the ATP pocket; the sequence is GQTGSGKT. Disordered regions lie at residues 401–485 and 732–788; these read QSNS…SSID and FSSS…QDQQ. Residues 406-418 show a composition bias toward gly residues; that stretch reads SGGGGSGSSGGSS. 2 stretches are compositionally biased toward low complexity: residues 466–485 and 733–781; these read TSSI…SSID and SSSN…PSSN. Positions 513 to 948 form a coiled coil; that stretch reads IEMEKMKEDT…DQLISTQRLI (436 aa).

The protein belongs to the TRAFAC class myosin-kinesin ATPase superfamily. Kinesin family. Kinesin subfamily. As to quaternary structure, interacts with actin.

The protein resides in the cytoplasm. Its subcellular location is the cytoskeleton. Microtubule-associated force-producing protein that plays a role in organelle transport. Its motor activity is directed toward the microtubule's plus end. May connect microtubules to actin filaments. Associates with actin-based structures in cells and is likely involved in the organization of actin cytoskeletons in such structures. This is Kinesin-related protein 5 (kif5) from Dictyostelium discoideum (Social amoeba).